The primary structure comprises 332 residues: Glyceraldehyde-3-phosphate dehydrogenase 2 (332 aa).

NAD(+) contacts are provided by arginine 11, isoleucine 12, and aspartate 33. Glycyl lysine isopeptide (Lys-Gly) (interchain with G-Cter in ubiquitin) cross-links involve residues lysine 46 and lysine 63. Threonine 120 is a binding site for NAD(+). D-glyceraldehyde 3-phosphate is bound by residues 149–151, threonine 180, 209–210, and arginine 232; these read SCT and TG. The Nucleophile role is filled by cysteine 150. Serine 302 carries the post-translational modification Phosphoserine. Residues asparagine 314 and tyrosine 318 each coordinate NAD(+).

This sequence belongs to the glyceraldehyde-3-phosphate dehydrogenase family. In terms of assembly, homotetramer.

It localises to the cytoplasm. The catalysed reaction is D-glyceraldehyde 3-phosphate + phosphate + NAD(+) = (2R)-3-phospho-glyceroyl phosphate + NADH + H(+). It catalyses the reaction NADH + H2O = (6R)-NADHX. The enzyme catalyses NADH + H2O = (6S)-NADHX. It carries out the reaction NADPH + H2O = (6R)-NADPHX. The catalysed reaction is NADPH + H2O = (6S)-NADPHX. It functions in the pathway carbohydrate degradation; glycolysis; pyruvate from D-glyceraldehyde 3-phosphate: step 1/5. Glyceraldehyde-3-phosphate dehydrogenase (GAPDH) involved in glycolysis and gluconeogenesis. Catalyzes the reaction of glyceraldehyde-3-phosphate to 1,3 bis-phosphoglycerate. The contribution of the TDH1, TDH2, and TDH3 to the total glyceraldehyde-3-phosphate dehydrogenase activity is 10-15, 25-30, and 50-60%, respectively. In terms of biological role, as a side activity, catalyzes the hydration of the nicotinamide ring of NADH or NADPH at the C6 position to give the corresponding hydrates, NADHX and NADPHX, which exist as R and S epimers, that cannot act as electron donors or acceptors and inhibit several dehydrogenases, making them toxic. This Saccharomyces cerevisiae (strain ATCC 204508 / S288c) (Baker's yeast) protein is Glyceraldehyde-3-phosphate dehydrogenase 2.